We begin with the raw amino-acid sequence, 397 residues long: Putative F-box protein At1g26510 (397 aa).

The interval 1 to 23 (MRTRSKKTKTVNNNNDLQKSEEK) is disordered. One can recognise an F-box domain in the interval 24–71 (QKFDQLPLDLEIEMFRRLPLKSVARFLTLSKSCATTIRSPSFITSFPS).

This is Putative F-box protein At1g26510 from Arabidopsis thaliana (Mouse-ear cress).